A 419-amino-acid polypeptide reads, in one-letter code: Zinc finger protein Pegasus (419 aa).

Lys5 is covalently cross-linked (Glycyl lysine isopeptide (Lys-Gly) (interchain with G-Cter in SUMO2)). The disordered stretch occupies residues 36-55; the sequence is DKEAETLQGAGTDGDQNGLD. 3 consecutive C2H2-type zinc fingers follow at residues 82 to 104, 110 to 132, and 138 to 161; these read LKCR…IRIH, HRCH…MRSH, and YKCE…RRKH. Lys185 is covalently cross-linked (Glycyl lysine isopeptide (Lys-Gly) (interchain with G-Cter in SUMO2)). Over residues 262 to 273 the composition is skewed to polar residues; the sequence is LSSLPPENQNPA. Disordered stretches follow at residues 262 to 284 and 297 to 356; these read LSSL…PDEK and VSAV…PTLP. A compositionally biased stretch (low complexity) spans 297-311; sequence VSAVSASIPQSSSPT. A compositionally biased stretch (polar residues) spans 332–349; that stretch reads SEPSAHTSTPSIGNSQPS. 2 consecutive C2H2-type zinc fingers follow at residues 364-386 and 392-416; these read HHCQ…MGCH and FQCN…RGQH.

This sequence belongs to the Ikaros C2H2-type zinc-finger protein family. Self-associates. Interacts with other family members; IKZF1, IKZF2, IKZF3 and IKZF4.

The protein resides in the nucleus. Its function is as follows. Transcriptional repressor that binds the core 5'GNNTGTNG-3' DNA consensus sequence. Involved in megakaryocyte differentiation. In Mus musculus (Mouse), this protein is Zinc finger protein Pegasus (Ikzf5).